The primary structure comprises 108 residues: uncharacterized protein (108 aa).

2 consecutive transmembrane segments (helical) span residues 5-27 (TVYG…QLEI) and 83-105 (IFLM…LNIF).

It localises to the membrane. This is an uncharacterized protein from Schizosaccharomyces pombe (strain 972 / ATCC 24843) (Fission yeast).